The chain runs to 350 residues: Probable DNA polymerase III subunit delta (350 aa).

The protein belongs to the DNA polymerase HolA subunit family. As to quaternary structure, component of the DNA clamp loading complex consisting of tau(3):delta(1):delta'(1). The DNA polymerase III holoenzyme complex contains at least 10 different subunits organized into 3 functionally essential subassemblies: the Pol III core, the beta sliding clamp processivity factor and the clamp-loading complex. The Pol III core (subunits alpha, epsilon and theta) contains the polymerase and the 3'-5' exonuclease proofreading activities. The polymerase is tethered to the template via the dimeric beta sliding clamp processivity factor. The DNA clamp-loading complex assembles the beta sliding clamp onto the primed template and plays a central role in the organization and communication at the replication fork.

It carries out the reaction DNA(n) + a 2'-deoxyribonucleoside 5'-triphosphate = DNA(n+1) + diphosphate. Functionally, part of the beta sliding clamp loading complex, which hydrolyzes ATP to load the beta clamp onto primed DNA to form the DNA replication pre-initiation complex. DNA polymerase III is a complex, multichain enzyme responsible for most of the replicative synthesis in bacteria. This DNA polymerase also exhibits 3'-5' exonuclease activity. The delta subunit is the wrench that will open the beta subunit dimer. The DNA clamp loading complex (tau(3),delta,delta') is thought to load beta dimers onto DNA by binding ATP which alters the complex's conformation so it can bind beta sliding clamp dimers and open them at one interface. Primed DNA is recognized, ATP is hydrolyzed releasing the clamp loading complex and closing the beta sliding clamp ring around the primed DNA. This chain is Probable DNA polymerase III subunit delta, found in Aquifex aeolicus (strain VF5).